The primary structure comprises 440 residues: L-seryl-tRNA(Sec) selenium transferase (440 aa).

Lys282 bears the N6-(pyridoxal phosphate)lysine mark.

Belongs to the SelA family. It depends on pyridoxal 5'-phosphate as a cofactor.

It localises to the cytoplasm. It carries out the reaction L-seryl-tRNA(Sec) + selenophosphate + H(+) = L-selenocysteinyl-tRNA(Sec) + phosphate. The protein operates within aminoacyl-tRNA biosynthesis; selenocysteinyl-tRNA(Sec) biosynthesis; selenocysteinyl-tRNA(Sec) from L-seryl-tRNA(Sec) (bacterial route): step 1/1. Functionally, converts seryl-tRNA(Sec) to selenocysteinyl-tRNA(Sec) required for selenoprotein biosynthesis. The protein is L-seryl-tRNA(Sec) selenium transferase of Campylobacter jejuni subsp. jejuni serotype O:6 (strain 81116 / NCTC 11828).